The sequence spans 400 residues: Argininosuccinate synthase (400 aa).

Position 8-16 (8-16 (AYSGGLDTS)) interacts with ATP. Tyr87 is a binding site for L-citrulline. Gly117 contacts ATP. 3 residues coordinate L-aspartate: Thr119, Asn123, and Asp124. Asn123 lines the L-citrulline pocket. Arg127, Ser175, Glu260, and Tyr272 together coordinate L-citrulline.

The protein belongs to the argininosuccinate synthase family. Type 1 subfamily. In terms of assembly, homotetramer.

It localises to the cytoplasm. It carries out the reaction L-citrulline + L-aspartate + ATP = 2-(N(omega)-L-arginino)succinate + AMP + diphosphate + H(+). Its pathway is amino-acid biosynthesis; L-arginine biosynthesis; L-arginine from L-ornithine and carbamoyl phosphate: step 2/3. The chain is Argininosuccinate synthase from Nocardia farcinica (strain IFM 10152).